The chain runs to 554 residues: Perforin-1 (554 aa).

The signal sequence occupies residues 1–20 (MATCLFLLGLFLLLPRPVPA). 3 disulfides stabilise this stretch: C22–C75, C30–C72, and C101–C175. Residues 26–374 (TRSECKQKHK…HYIMSRARWQ (349 aa)) form the MACPF domain. Residues 128-148 (WRVGLDVNPRPEANMRASVAG) form a beta stranded membrane-spanning segment. A glycan (N-linked (GlcNAc...) asparagine) is linked at N204. 4 disulfide bridges follow: C241/C407, C376/C392, C380/C394, and C396/C406. Residues 256-278 (CLNVEAQVSIGAQASVSSEYKAC) form a beta stranded membrane-spanning segment. The N-linked (GlcNAc...) asparagine glycan is linked to N375. The region spanning 375–407 (NCSRPCRSGQHKSSHDSCQCECQDSKVTNQDCC) is the EGF-like domain. A C2 domain is found at 395 to 513 (ECQDSKVTNQ…FHEVTCELNH (119 aa)). Residues G428, D429, T432, A433, D435, N454, E467, D483, A484, D485, W488, D489, D490, and D491 each coordinate Ca(2+). Cystine bridges form between C496–C509 and C524–C533. The N-linked (GlcNAc...) asparagine glycan is linked to N548.

The protein belongs to the complement C6/C7/C8/C9 family. In terms of assembly, monomer, as soluble protein. Homooligomer; homooligomerizes to form a pore-forming ring. Ca(2+) is required as a cofactor. N-glycosylated. The glycosylation sites are facing the interior of the pore. Detected in cytotoxic T-lymphocytes and natural killer cells.

The protein resides in the cytolytic granule. It is found in the secreted. The protein localises to the cell membrane. Its subcellular location is the endosome lumen. In terms of biological role, pore-forming protein that plays a key role in granzyme-mediated programmed cell death, and in defense against virus-infected or neoplastic cells. Can insert into the membrane of target cells in its calcium-bound form, oligomerize and form large pores. Promotes cytolysis and apoptosis of target cells by mediating the passage and uptake of cytotoxic granzymes. Facilitates the delivery of cationic cargo protein, while anionic or neural proteins are not delivered efficiently. Perforin pores allow the release of mature caspase-7 (CASP7) into the extracellular milieu. This chain is Perforin-1 (Prf1), found in Mus musculus (Mouse).